Consider the following 1010-residue polypeptide: Retinoblastoma-related protein 1 (1010 aa).

The disordered stretch occupies residues 1–23 (MEGAAPPASSGSEVTGAGSGKVD). Residues 419 to 619 (TPVSTAMTTA…EKGSSMYNSL (201 aa)) are domain A. Positions 419–861 (TPVSTAMTTA…NEVFIPTVKP (443 aa)) are pocket. The tract at residues 620-730 (IVARPTLSAE…PAAGGELCAE (111 aa)) is spacer. Residues 657-679 (LPPLPFQKQEHSPDKDEVRSPKR) form a disordered region. Basic and acidic residues predominate over residues 664 to 679 (KQEHSPDKDEVRSPKR). The tract at residues 731–861 (TGIGVFLSKI…NEVFIPTVKP (131 aa)) is domain B. The segment at 868 to 898 (SGTSPNKKNEEKCAADGPYPESPRLSRFPNL) is disordered.

It belongs to the retinoblastoma protein (RB) family.

The protein resides in the nucleus. Regulator of biological processes that recruits a histone deacetylase to control gene transcription. May play a role in the entry into mitosis, negatively regulating the cell proliferation. Formation of stable complexes with geminiviridae replication-associated proteins may create a cellular environment which favors viral DNA replication. The polypeptide is Retinoblastoma-related protein 1 (RBR1) (Oryza sativa subsp. japonica (Rice)).